The chain runs to 334 residues: L-lactate dehydrogenase B chain (334 aa).

Residue Ala-2 is modified to N-acetylalanine. At Lys-7 the chain carries N6-acetyllysine. A phosphoserine mark is found at Ser-11 and Ser-44. NAD(+)-binding positions include 30–58 (GQVG…LEDK) and Arg-100. Lys-58 is subject to N6-acetyllysine. A substrate-binding site is contributed by Arg-107. An N6-acetyllysine modification is found at Lys-119. Asn-139 is a binding site for NAD(+). Substrate contacts are provided by Asn-139 and Arg-170. His-194 acts as the Proton acceptor in catalysis. At Tyr-240 the chain carries Phosphotyrosine. Substrate is bound at residue Thr-249. N6-acetyllysine is present on Lys-329.

The protein belongs to the LDH/MDH superfamily. LDH family. As to quaternary structure, homotetramer. Interacts with PTEN upstream reading frame protein MP31; the interaction leads to inhibition of mitochondrial lactate dehydrogenase activity, preventing conversion of lactate to pyruvate in mitochondria.

It is found in the cytoplasm. The protein localises to the mitochondrion inner membrane. It catalyses the reaction (S)-lactate + NAD(+) = pyruvate + NADH + H(+). The protein operates within fermentation; pyruvate fermentation to lactate; (S)-lactate from pyruvate: step 1/1. Its function is as follows. Interconverts simultaneously and stereospecifically pyruvate and lactate with concomitant interconversion of NADH and NAD(+). The sequence is that of L-lactate dehydrogenase B chain (Ldhb) from Mus musculus (Mouse).